We begin with the raw amino-acid sequence, 1018 residues long: Pikachurin (1018 aa).

Residues 1–23 (MDLIRGVLLRLLLLASSLGPGAA) form the signal peptide. Fibronectin type-III domains follow at residues 37–145 (PPLD…TLPQ) and 153–248 (APQQ…TARP). An N-linked (GlcNAc...) asparagine glycan is attached at Asn-47. The segment at 228-274 (VNPHGSSPRSQPSSTIRTARPEESGSGRYGPHYATDTEAGEDDDTFE) is disordered. The segment covering 231 to 244 (HGSSPRSQPSSTIR) has biased composition (polar residues). Acidic residues predominate over residues 265 to 274 (EAGEDDDTFE). The EGF-like 1 domain occupies 352–390 (FDTSCDETVCSADSFCVSDYTWGGSRCHCNLGKGGESCS). 11 disulfides stabilise this stretch: Cys-356–Cys-367, Cys-361–Cys-378, Cys-380–Cys-389, Cys-543–Cys-573, Cys-578–Cys-589, Cys-583–Cys-599, Cys-601–Cys-610, Cys-797–Cys-808, Cys-802–Cys-817, Cys-819–Cys-828, and Cys-988–Cys-1015. A Laminin G-like 1 domain is found at 395–573 (IQYPQFFGHS…ALSGADVGEC (179 aa)). 2 consecutive EGF-like domains span residues 574 to 611 (SSGICDEASCINGGTCMASKADSYICLCPLGFRGRHCE) and 793 to 829 (AAHPCVGSPCAHGGSCRPRKEGYECDCPLGFEGLHCQ). A Laminin G-like 2 domain is found at 618–797 (IPQFKESLRS…VNVENAAHPC (180 aa)). In terms of domain architecture, Laminin G-like 3 spans 836–1015 (IEIPQFIGRS…AVDGKNINTC (180 aa)).

In terms of assembly, interacts with DAG1 alpha-dystroglycan. Interacts with GPR158 and GPR179; transsynaptic interaction is required for synaptic organization of photoreceptor cells. In terms of processing, O-glycosylated; contains chondroitin sulfate and heparan sulfate.

The protein resides in the secreted. Its subcellular location is the extracellular space. It localises to the extracellular matrix. The protein localises to the synaptic cleft. It is found in the presynaptic active zone. Its function is as follows. Involved in both the retinal photoreceptor ribbon synapse formation and physiological functions of visual perception. Plays a key role in the synaptic organization of photoreceptors by mediating transsynaptic interaction between alpha-dystroglycan and GPR179 on the postsynaptic membrane. Necessary for proper bipolar dendritic tip apposition to the photoreceptor ribbon synapse. Promotes matrix assembly and cell adhesiveness. The polypeptide is Pikachurin (EGFLAM) (Bos taurus (Bovine)).